The primary structure comprises 225 residues: MSGDASTPEQDQNVVSGAVPATRESSPDAPEATSEQASAAVDPADRMQQLEQELSALKQEHDTLNSQYMRIAADFDNFRKRQSRDQDDMRKQLVCSTLTEILPVVDNFERARQQLNPEGEEAQALHRSYQGLYKQLVEVLKQQGVARMDVVGQEFDPNLHEAVLREESSEFAEDVVSEELQRGYHRDGRVLRHAMVKVSMGPGPSDPGSAPAEAAAAPDQTAEEA.

Polar residues predominate over residues 1–15 (MSGDASTPEQDQNVV). 2 disordered regions span residues 1–48 (MSGD…DRMQ) and 198–225 (VSMG…AEEA). Positions 201–225 (GPGPSDPGSAPAEAAAAPDQTAEEA) are enriched in low complexity.

It belongs to the GrpE family. As to quaternary structure, homodimer.

It is found in the cytoplasm. In terms of biological role, participates actively in the response to hyperosmotic and heat shock by preventing the aggregation of stress-denatured proteins, in association with DnaK and GrpE. It is the nucleotide exchange factor for DnaK and may function as a thermosensor. Unfolded proteins bind initially to DnaJ; upon interaction with the DnaJ-bound protein, DnaK hydrolyzes its bound ATP, resulting in the formation of a stable complex. GrpE releases ADP from DnaK; ATP binding to DnaK triggers the release of the substrate protein, thus completing the reaction cycle. Several rounds of ATP-dependent interactions between DnaJ, DnaK and GrpE are required for fully efficient folding. The protein is Protein GrpE of Synechococcus sp. (strain CC9605).